Reading from the N-terminus, the 61-residue chain is Small ribosomal subunit protein uS14 (61 aa).

4 residues coordinate Zn(2+): Cys-24, Cys-27, Cys-40, and Cys-43.

This sequence belongs to the universal ribosomal protein uS14 family. Zinc-binding uS14 subfamily. In terms of assembly, part of the 30S ribosomal subunit. Contacts proteins S3 and S10. It depends on Zn(2+) as a cofactor.

Its function is as follows. Binds 16S rRNA, required for the assembly of 30S particles and may also be responsible for determining the conformation of the 16S rRNA at the A site. The polypeptide is Small ribosomal subunit protein uS14 (Acidothermus cellulolyticus (strain ATCC 43068 / DSM 8971 / 11B)).